A 360-amino-acid polypeptide reads, in one-letter code: Phospho-N-acetylmuramoyl-pentapeptide-transferase (360 aa).

10 helical membrane-spanning segments follow: residues Tyr21–Gly41, Thr73–Leu93, Thr94–Val114, Ala145–Phe165, Val168–Ser188, Gly199–Ser219, Ala236–Phe256, Val263–Ile283, Ile288–Val308, and Ile339–Ile359.

The protein belongs to the glycosyltransferase 4 family. MraY subfamily. Requires Mg(2+) as cofactor.

It is found in the cell inner membrane. It carries out the reaction UDP-N-acetyl-alpha-D-muramoyl-L-alanyl-gamma-D-glutamyl-meso-2,6-diaminopimeloyl-D-alanyl-D-alanine + di-trans,octa-cis-undecaprenyl phosphate = di-trans,octa-cis-undecaprenyl diphospho-N-acetyl-alpha-D-muramoyl-L-alanyl-D-glutamyl-meso-2,6-diaminopimeloyl-D-alanyl-D-alanine + UMP. Its pathway is cell wall biogenesis; peptidoglycan biosynthesis. Functionally, catalyzes the initial step of the lipid cycle reactions in the biosynthesis of the cell wall peptidoglycan: transfers peptidoglycan precursor phospho-MurNAc-pentapeptide from UDP-MurNAc-pentapeptide onto the lipid carrier undecaprenyl phosphate, yielding undecaprenyl-pyrophosphoryl-MurNAc-pentapeptide, known as lipid I. This Chromohalobacter salexigens (strain ATCC BAA-138 / DSM 3043 / CIP 106854 / NCIMB 13768 / 1H11) protein is Phospho-N-acetylmuramoyl-pentapeptide-transferase.